A 727-amino-acid chain; its full sequence is Protein TITANIA (727 aa).

The tract at residues 1–136 (MFGDSDGSKD…LASLLQPVPA (136 aa)) is disordered. A compositionally biased stretch (pro residues) spans 14 to 25 (GAPPSTTDPPFP). The segment covering 67-88 (DDGKHCVERDFLHLSAPKRGDP) has biased composition (basic and acidic residues). The span at 104-117 (DSLQLSLSLNSDGP) shows a compositional bias: low complexity. Residues 406-470 (ACTCSVCHKF…QFQCLACNHS (65 aa)) form a PHD-type zinc finger. Positions 629-697 (VKCKEAEAKL…LEELKMLENS (69 aa)) form a coiled coil.

Widely expressed.

Its subcellular location is the nucleus. Probable transcription factor that functions as a regulator of metal transporter genes responsible for essential metals delivery to shoots and normal plant growth. Required for the maintenance of metal transporter gene expression, such as IRT1, IRT2, ZIP1, ZIP9, NRAMP1 and NRAMP5. This Oryza sativa subsp. japonica (Rice) protein is Protein TITANIA.